We begin with the raw amino-acid sequence, 181 residues long: Acireductone dioxygenase (181 aa).

Residues H97, H99, E103, and H141 each coordinate Fe(2+). The Ni(2+) site is built by H97, H99, E103, and H141.

The protein belongs to the acireductone dioxygenase (ARD) family. In terms of assembly, monomer. Requires Fe(2+) as cofactor. It depends on Ni(2+) as a cofactor.

It catalyses the reaction 1,2-dihydroxy-5-(methylsulfanyl)pent-1-en-3-one + O2 = 3-(methylsulfanyl)propanoate + CO + formate + 2 H(+). It carries out the reaction 1,2-dihydroxy-5-(methylsulfanyl)pent-1-en-3-one + O2 = 4-methylsulfanyl-2-oxobutanoate + formate + 2 H(+). The protein operates within amino-acid biosynthesis; L-methionine biosynthesis via salvage pathway; L-methionine from S-methyl-5-thio-alpha-D-ribose 1-phosphate: step 5/6. In terms of biological role, catalyzes 2 different reactions between oxygen and the acireductone 1,2-dihydroxy-3-keto-5-methylthiopentene (DHK-MTPene) depending upon the metal bound in the active site. Fe-containing acireductone dioxygenase (Fe-ARD) produces formate and 2-keto-4-methylthiobutyrate (KMTB), the alpha-ketoacid precursor of methionine in the methionine recycle pathway. Ni-containing acireductone dioxygenase (Ni-ARD) produces methylthiopropionate, carbon monoxide and formate, and does not lie on the methionine recycle pathway. The protein is Acireductone dioxygenase of Pseudomonas syringae pv. syringae (strain B728a).